The primary structure comprises 269 residues: NAD kinase (269 aa).

Asp-45 serves as the catalytic Proton acceptor. Residues 45 to 46, 121 to 122, Arg-147, Asp-149, 160 to 165, and Ala-184 contribute to the NAD(+) site; these read DG, NE, and TAYNRS.

This sequence belongs to the NAD kinase family. A divalent metal cation is required as a cofactor.

The protein localises to the cytoplasm. It catalyses the reaction NAD(+) + ATP = ADP + NADP(+) + H(+). In terms of biological role, involved in the regulation of the intracellular balance of NAD and NADP, and is a key enzyme in the biosynthesis of NADP. Catalyzes specifically the phosphorylation on 2'-hydroxyl of the adenosine moiety of NAD to yield NADP. The polypeptide is NAD kinase (Pediococcus pentosaceus (strain ATCC 25745 / CCUG 21536 / LMG 10740 / 183-1w)).